Here is a 200-residue protein sequence, read N- to C-terminus: Protein Syd (200 aa).

This sequence belongs to the Syd family.

It is found in the cell inner membrane. In terms of biological role, interacts with the SecY protein in vivo. May bind preferentially to an uncomplexed state of SecY, thus functioning either as a chelating agent for excess SecY in the cell or as a regulatory factor that negatively controls the translocase function. This chain is Protein Syd, found in Colwellia psychrerythraea (strain 34H / ATCC BAA-681) (Vibrio psychroerythus).